The chain runs to 411 residues: Probable peptidoglycan glycosyltransferase FtsW (411 aa).

Residues 1–40 (MLERMLPFLGRKRDKAAADLPVRVGHSAPRNSRMLEYDQN) are Cytoplasmic-facing. A helical transmembrane segment spans residues 41–61 (LVWVTLLLLAYGLVMVYSATI). The Periplasmic portion of the chain corresponds to 62–81 (SFHDSPRYAQWSPYHYFIRD). The chain crosses the membrane as a helical span at residues 82–102 (LFSIAAALLASWIVVQIPMAE). The Cytoplasmic segment spans residues 103-109 (LQKWSMR). The chain crosses the membrane as a helical span at residues 110–130 (FFFLSLIGLVLVLLPHIGKDV). The Periplasmic segment spans residues 131–136 (NGSKRW). Residues 137-157 (VVFPGGLNFQPSELVKLTALI) traverse the membrane as a helical segment. Over 158 to 172 (YAADFMVRKQEVKQS) the chain is Cytoplasmic. The chain crosses the membrane as a helical span at residues 173 to 193 (LLKTFLPMMAVMMIVGVLLLA). Over 194-196 (EPD) the chain is Periplasmic. Residues 197–217 (MGAFLVIASITLAILFLGGAN) form a helical membrane-spanning segment. Over 218 to 219 (GK) the chain is Cytoplasmic. The helical transmembrane segment at 220 to 240 (LFSVFSVAVIGAFVLMIVLSP) threads the bilayer. Over 241-298 (WRRDRIFAYLNPWSESNALGSAYQLSHALIAMGRGEWFGVGLGGSIEKLHYLPEAHTD) the chain is Periplasmic. The helical transmembrane segment at 299 to 319 (FLLAIIGEELGLVGVGVVIFA) threads the bilayer. Topologically, residues 320–347 (FYWIVRRAFDIGRQALVLDRMYSALVAQ) are cytoplasmic. The chain crosses the membrane as a helical span at residues 348-368 (GIGVWIGGQAFINIGVNLGLL). The Periplasmic segment spans residues 369 to 374 (PTKGLT). Residues 375 to 395 (LPLMSYGGSALLLNCMAIAVL) form a helical membrane-spanning segment. At 396 to 411 (LRVDFENRILMRGGHV) the chain is on the cytoplasmic side.

This sequence belongs to the SEDS family. FtsW subfamily.

The protein localises to the cell inner membrane. It carries out the reaction [GlcNAc-(1-&gt;4)-Mur2Ac(oyl-L-Ala-gamma-D-Glu-L-Lys-D-Ala-D-Ala)](n)-di-trans,octa-cis-undecaprenyl diphosphate + beta-D-GlcNAc-(1-&gt;4)-Mur2Ac(oyl-L-Ala-gamma-D-Glu-L-Lys-D-Ala-D-Ala)-di-trans,octa-cis-undecaprenyl diphosphate = [GlcNAc-(1-&gt;4)-Mur2Ac(oyl-L-Ala-gamma-D-Glu-L-Lys-D-Ala-D-Ala)](n+1)-di-trans,octa-cis-undecaprenyl diphosphate + di-trans,octa-cis-undecaprenyl diphosphate + H(+). It participates in cell wall biogenesis; peptidoglycan biosynthesis. Peptidoglycan polymerase that is essential for cell division. This chain is Probable peptidoglycan glycosyltransferase FtsW, found in Thiomonas intermedia (strain K12) (Thiobacillus intermedius).